A 535-amino-acid polypeptide reads, in one-letter code: BAR/IMD domain-containing adapter protein 2 (535 aa).

Residues 1–250 (MSLSRSEEMH…AQLMQQMANS (250 aa)) enclose the IMD domain. The stretch at 1 to 251 (MSLSRSEEMH…QLMQQMANSN (251 aa)) forms a coiled coil. A phosphoserine mark is found at serine 262, serine 324, serine 326, and serine 337. Residues 308–370 (SEDYNPWADR…TLPRSSSMAA (63 aa)) form a disordered region. The segment covering 321–335 (QPKSLSPPQSQSKLS) has biased composition (low complexity). Threonine 341 is modified (phosphothreonine). Phosphoserine is present on serine 347. A compositionally biased stretch (polar residues) spans 349–368 (TPKNSYATTENKTLPRSSSM). Threonine 361 is modified (phosphothreonine). A phosphoserine mark is found at serine 367, serine 385, serine 396, and serine 455. The region spanning 375-438 (NGRMRVKAIF…PFSYTRVLDS (64 aa)) is the SH3 domain. The segment at 445–486 (HMSLQQGKSSSTGNLLDKDDLALPPPDYGTSSRAFPSQTAGT) is disordered. 2 stretches are compositionally biased toward polar residues: residues 447–458 (SLQQGKSSSTGN) and 473–486 (GTSS…TAGT).

Homodimer. Interacts with CDC42 and RAC1 that have been activated by GTP binding. Binds TIAM1. Interacts with ATN1, ADGRB1, DIAPH1, EPS8, SHANK1, SHANK2, SHANK3, WASF1 and WASF2. Interacts with ENAH after recruitment of CDC42. Post-translationally, phosphorylated on tyrosine residues by INSR in response to insulin treatment. Ubiquitous.

It localises to the cytoplasm. Its subcellular location is the membrane. It is found in the cell projection. The protein resides in the filopodium. The protein localises to the ruffle. It localises to the cytoskeleton. Its function is as follows. Adapter protein that links membrane-bound small G-proteins to cytoplasmic effector proteins. Necessary for CDC42-mediated reorganization of the actin cytoskeleton and for RAC1-mediated membrane ruffling. Involved in the regulation of the actin cytoskeleton by WASF family members and the Arp2/3 complex. Plays a role in neurite growth. Acts syngeristically with ENAH to promote filipodia formation. Plays a role in the reorganization of the actin cytoskeleton in response to bacterial infection. Participates in actin bundling when associated with EPS8, promoting filopodial protrusions. This Rattus norvegicus (Rat) protein is BAR/IMD domain-containing adapter protein 2 (Baiap2).